A 93-amino-acid polypeptide reads, in one-letter code: Acylphosphatase (93 aa).

Residues 6-93 (RAHILVSGEV…GDLGPFSVRH (88 aa)) enclose the Acylphosphatase-like domain. Residues Arg21 and Asn39 contribute to the active site.

This sequence belongs to the acylphosphatase family.

The enzyme catalyses an acyl phosphate + H2O = a carboxylate + phosphate + H(+). In Anaeromyxobacter sp. (strain Fw109-5), this protein is Acylphosphatase (acyP).